Consider the following 244-residue polypeptide: Phosphoadenosine 5'-phosphosulfate reductase (244 aa).

Residue C239 is the Nucleophile; cysteine thiosulfonate intermediate of the active site.

Belongs to the PAPS reductase family. CysH subfamily.

The protein resides in the cytoplasm. It catalyses the reaction [thioredoxin]-disulfide + sulfite + adenosine 3',5'-bisphosphate + 2 H(+) = [thioredoxin]-dithiol + 3'-phosphoadenylyl sulfate. Its pathway is sulfur metabolism; hydrogen sulfide biosynthesis; sulfite from sulfate: step 3/3. Its function is as follows. Catalyzes the formation of sulfite from phosphoadenosine 5'-phosphosulfate (PAPS) using thioredoxin as an electron donor. This chain is Phosphoadenosine 5'-phosphosulfate reductase, found in Pectobacterium carotovorum subsp. carotovorum (strain PC1).